The chain runs to 437 residues: uncharacterized protein (437 aa).

A phosphoserine mark is found at S290 and S293. The residue at position 296 (T296) is a Phosphothreonine. S418 and S428 each carry phosphoserine.

This is an uncharacterized protein from Schizosaccharomyces pombe (strain 972 / ATCC 24843) (Fission yeast).